The primary structure comprises 347 residues: Eukaryotic translation initiation factor 3 subunit I (347 aa).

WD repeat units follow at residues 8 to 47 (GHERPLTQVKYNKEGDLLFSCSKDSSASVWYSLNGERLGT), 50 to 89 (GHTGTIWSIDVDCFTKYCVTGSADYSIKLWDVSNGQCVAT), 149 to 190 (THEG…EYVD), 194 to 233 (LHEKSISDMQFSPDLTYFITSSRDTNSFLVDVSTLQVLKK), and 291 to 330 (GHFGPLNTVAISPQGTSYASGGEDGFIRLHHFEKSYFDFK). Phosphoserine is present on S302.

It belongs to the eIF-3 subunit I family. Component of the eukaryotic translation initiation factor 3 (eIF-3) complex.

It localises to the cytoplasm. Component of the eukaryotic translation initiation factor 3 (eIF-3) complex, which is involved in protein synthesis of a specialized repertoire of mRNAs and, together with other initiation factors, stimulates binding of mRNA and methionyl-tRNAi to the 40S ribosome. The eIF-3 complex specifically targets and initiates translation of a subset of mRNAs involved in cell proliferation. This is Eukaryotic translation initiation factor 3 subunit I from Saccharomyces cerevisiae (strain YJM789) (Baker's yeast).